The sequence spans 586 residues: Aspartate--tRNA(Asp/Asn) ligase (586 aa).

Residue glutamate 175 coordinates L-aspartate. The aspartate stretch occupies residues glutamine 199–lysine 202. Arginine 221 contributes to the L-aspartate binding site. ATP contacts are provided by residues arginine 221–glutamate 223 and glutamine 230. L-aspartate is bound at residue histidine 448. An ATP-binding site is contributed by glutamate 482. An L-aspartate-binding site is contributed by arginine 489. Glycine 534–arginine 537 contacts ATP.

It belongs to the class-II aminoacyl-tRNA synthetase family. Type 1 subfamily. Homodimer.

It localises to the cytoplasm. The enzyme catalyses tRNA(Asx) + L-aspartate + ATP = L-aspartyl-tRNA(Asx) + AMP + diphosphate. In terms of biological role, aspartyl-tRNA synthetase with relaxed tRNA specificity since it is able to aspartylate not only its cognate tRNA(Asp) but also tRNA(Asn). Reaction proceeds in two steps: L-aspartate is first activated by ATP to form Asp-AMP and then transferred to the acceptor end of tRNA(Asp/Asn). This is Aspartate--tRNA(Asp/Asn) ligase from Syntrophomonas wolfei subsp. wolfei (strain DSM 2245B / Goettingen).